A 262-amino-acid chain; its full sequence is Small ribosomal subunit protein eS1 (262 aa).

This sequence belongs to the eukaryotic ribosomal protein eS1 family. In terms of assembly, component of the small ribosomal subunit. Mature ribosomes consist of a small (40S) and a large (60S) subunit. The 40S subunit contains about 32 different proteins and 1 molecule of RNA (18S). The 60S subunit contains about 42 different proteins and 3 molecules of RNA (28S, 5.8S and 5S).

It is found in the cytoplasm. Its function is as follows. Component of the ribosome, a large ribonucleoprotein complex responsible for the synthesis of proteins in the cell. The small ribosomal subunit (SSU) binds messenger RNAs (mRNAs) and translates the encoded message by selecting cognate aminoacyl-transfer RNA (tRNA) molecules. The large subunit (LSU) contains the ribosomal catalytic site termed the peptidyl transferase center (PTC), which catalyzes the formation of peptide bonds, thereby polymerizing the amino acids delivered by tRNAs into a polypeptide chain. The nascent polypeptides leave the ribosome through a tunnel in the LSU and interact with protein factors that function in enzymatic processing, targeting, and the membrane insertion of nascent chains at the exit of the ribosomal tunnel. In Plasmodium falciparum (isolate 3D7), this protein is Small ribosomal subunit protein eS1.